The chain runs to 66 residues: Large ribosomal subunit protein uL29c (66 aa).

This sequence belongs to the universal ribosomal protein uL29 family.

It is found in the plastid. The protein localises to the chloroplast. This Gracilaria tenuistipitata var. liui (Red alga) protein is Large ribosomal subunit protein uL29c.